A 407-amino-acid chain; its full sequence is MSRQINAATPSSSRHHRLSLSRRRINFTTPSEAQPSSSSRSQTSSSSRSHRRQERRQEQRVSEENVQIIGNVNEPLTRSYHRQGVTYNVHGEVNISNADPLLSQEDDVILINSENVDRERFPDISSQQYQNNIASETAAQRALQRALDLEAQLMNEIAPRSPVYSPSYAPNSPNYVIPQSPDLFASPQSSEQQQQSEPEEDVEVSCNICFTTFKDTKNVNSSFVTTTHCNHAVCFKCYVKIIMANSVYKCFCSATSSNCRVYNKHGYVEFMPIDVTRNQDSIKQHWRELLENNTVNNQTTDLNYVEQLQKELAELRAKTCQVEHKMTMLNSDYIMLKHKHAVAELDLQKANYDLQESTKKSEELQSTVNNLQEQLNKQVVESQAKFLEFERNNSDLVSKLQTVMSRR.

Over residues 1–10 the composition is skewed to polar residues; sequence MSRQINAATP. The disordered stretch occupies residues 1 to 69; sequence MSRQINAATP…RVSEENVQII (69 aa). A compositionally biased stretch (basic residues) spans 13–25; the sequence is SRHHRLSLSRRRI. Residues 31–47 show a composition bias toward low complexity; sequence SEAQPSSSSRSQTSSSS. Residues 127–158 are a coiled coil; the sequence is QQYQNNIASETAAQRALQRALDLEAQLMNEIA. A disordered region spans residues 179–200; sequence QSPDLFASPQSSEQQQQSEPEE. Residues 186-196 show a composition bias toward low complexity; sequence SPQSSEQQQQS. Residues 206 to 254 form an RING-type; degenerate zinc finger; the sequence is CNICFTTFKDTKNVNSSFVTTTHCNHAVCFKCYVKIIMANSVYKCFCSA. Residues 336–393 are a coiled coil; sequence LKHKHAVAELDLQKANYDLQESTKKSEELQSTVNNLQEQLNKQVVESQAKFLEFERNN.

The protein belongs to the alphabaculovirus IE2 protein family. Homooligomer. Post-translationally, auto-ubiquitinated.

Its subcellular location is the host nucleus. It catalyses the reaction S-ubiquitinyl-[E2 ubiquitin-conjugating enzyme]-L-cysteine + [acceptor protein]-L-lysine = [E2 ubiquitin-conjugating enzyme]-L-cysteine + N(6)-ubiquitinyl-[acceptor protein]-L-lysine.. In terms of biological role, RING-finger E3 ubiquitin ligase that plays an important regulatory role during the initial stages of infection. Migrates to specific nuclear foci early in infection supposely to prepare the sites for viral replication by targeting and ubiquitinating host proteins. This chain is E3 ubiquitin-protein ligase IE2 (IE2), found in Rachiplusia ou multiple nucleopolyhedrovirus (strain R1) (RoMNPV).